We begin with the raw amino-acid sequence, 30 residues long: Cyclotide cter-G (30 aa).

Positions 1-30 (GLPCGESCVFIPCITTVVGCSCKNKVCYNN) form a cross-link, cyclopeptide (Gly-Asn). 3 cysteine pairs are disulfide-bonded: Cys-4-Cys-20, Cys-8-Cys-22, and Cys-13-Cys-27.

Post-translationally, contains 3 disulfide bonds. In terms of processing, this is a cyclic peptide.

Its function is as follows. Probably participates in a plant defense mechanism. This chain is Cyclotide cter-G, found in Clitoria ternatea (Butterfly pea).